Reading from the N-terminus, the 506-residue chain is Nucleoside import ATP-binding protein NupA (506 aa).

2 consecutive ABC transporter domains span residues 7 to 242 (IQMI…VGRS) and 259 to 503 (LEIK…VGGN). Residue 39 to 46 (GENGAGKS) participates in ATP binding.

Belongs to the ABC transporter superfamily. The complex is composed of two ATP-binding proteins (NupA), two transmembrane proteins (NupB and NupC) and a solute-binding protein (BmpA).

It localises to the cell membrane. Part of an ABC transporter complex involved in the uptake of all common nucleosides. Responsible for energy coupling to the transport system. This is Nucleoside import ATP-binding protein NupA from Lactococcus lactis subsp. cremoris (strain MG1363).